A 113-amino-acid chain; its full sequence is Phosphoribosyl-ATP pyrophosphatase (113 aa).

The protein belongs to the PRA-PH family.

The protein resides in the cytoplasm. It catalyses the reaction 1-(5-phospho-beta-D-ribosyl)-ATP + H2O = 1-(5-phospho-beta-D-ribosyl)-5'-AMP + diphosphate + H(+). Its pathway is amino-acid biosynthesis; L-histidine biosynthesis; L-histidine from 5-phospho-alpha-D-ribose 1-diphosphate: step 2/9. This chain is Phosphoribosyl-ATP pyrophosphatase, found in Hydrogenovibrio crunogenus (strain DSM 25203 / XCL-2) (Thiomicrospira crunogena).